The sequence spans 297 residues: Retroviral cyclin (297 aa).

A Cyclin N-terminal domain is found at 21–113 (PVYWKELLNW…KPSLLLTETM (93 aa)). Residues 21-113 (PVYWKELLNW…KPSLLLTETM (93 aa)) are transcription activation domain. The stretch at 222–270 (QINLDFAEAEQREAAERRALLEREREQQLQEARERLDDVMAVLEAEVAI) forms a coiled coil.

The protein belongs to the cyclin family. In terms of assembly, interacts (via transcription activation domain) with host TAF9 in vitro. Interacts with host CDK3 and CDK8.

The protein resides in the host nucleus. Transforming protein which induces the development of dermal sarcomas. Induces positive and negative regulation of transcription from host and viral promoters by interacting with various cellular factors involved in protein transcription regulation. This Sander vitreus (Walleye) protein is Retroviral cyclin (orfA).